A 192-amino-acid polypeptide reads, in one-letter code: Crossover junction endodeoxyribonuclease RuvC (192 aa).

Active-site residues include aspartate 8, glutamate 67, and aspartate 139. The Mg(2+) site is built by aspartate 8, glutamate 67, and aspartate 139.

The protein belongs to the RuvC family. Homodimer which binds Holliday junction (HJ) DNA. The HJ becomes 2-fold symmetrical on binding to RuvC with unstacked arms; it has a different conformation from HJ DNA in complex with RuvA. In the full resolvosome a probable DNA-RuvA(4)-RuvB(12)-RuvC(2) complex forms which resolves the HJ. Mg(2+) serves as cofactor.

Its subcellular location is the cytoplasm. It carries out the reaction Endonucleolytic cleavage at a junction such as a reciprocal single-stranded crossover between two homologous DNA duplexes (Holliday junction).. In terms of biological role, the RuvA-RuvB-RuvC complex processes Holliday junction (HJ) DNA during genetic recombination and DNA repair. Endonuclease that resolves HJ intermediates. Cleaves cruciform DNA by making single-stranded nicks across the HJ at symmetrical positions within the homologous arms, yielding a 5'-phosphate and a 3'-hydroxyl group; requires a central core of homology in the junction. The consensus cleavage sequence is 5'-(A/T)TT(C/G)-3'. Cleavage occurs on the 3'-side of the TT dinucleotide at the point of strand exchange. HJ branch migration catalyzed by RuvA-RuvB allows RuvC to scan DNA until it finds its consensus sequence, where it cleaves and resolves the cruciform DNA. In Actinobacillus pleuropneumoniae serotype 5b (strain L20), this protein is Crossover junction endodeoxyribonuclease RuvC.